The sequence spans 51 residues: Large ribosomal subunit protein bL33 (51 aa).

The protein belongs to the bacterial ribosomal protein bL33 family.

In Acidithiobacillus ferrooxidans (strain ATCC 53993 / BNL-5-31) (Leptospirillum ferrooxidans (ATCC 53993)), this protein is Large ribosomal subunit protein bL33.